The following is a 160-amino-acid chain: Large ribosomal subunit protein eL21 (160 aa).

It belongs to the eukaryotic ribosomal protein eL21 family. As to quaternary structure, component of the large ribosomal subunit. Mature ribosomes consist of a small (40S) and a large (60S) subunit. The 40S subunit contains about 32 different proteins and 1 molecule of RNA (18S). The 60S subunit contains 45 different proteins and 3 molecules of RNA (25S, 5.8S and 5S).

Its subcellular location is the cytoplasm. Component of the ribosome, a large ribonucleoprotein complex responsible for the synthesis of proteins in the cell. The small ribosomal subunit (SSU) binds messenger RNAs (mRNAs) and translates the encoded message by selecting cognate aminoacyl-transfer RNA (tRNA) molecules. The large subunit (LSU) contains the ribosomal catalytic site termed the peptidyl transferase center (PTC), which catalyzes the formation of peptide bonds, thereby polymerizing the amino acids delivered by tRNAs into a polypeptide chain. The nascent polypeptides leave the ribosome through a tunnel in the LSU and interact with protein factors that function in enzymatic processing, targeting, and the membrane insertion of nascent chains at the exit of the ribosomal tunnel. This Candida albicans (strain SC5314 / ATCC MYA-2876) (Yeast) protein is Large ribosomal subunit protein eL21.